We begin with the raw amino-acid sequence, 713 residues long: Forkhead box protein P2 (713 aa).

Residues 1-28 show a composition bias toward polar residues; the sequence is MMQESVTETISNSSMNQNGMSTLSSQLD. 2 disordered regions span residues 1 to 44 and 279 to 337; these read MMQE…SSEV and DNGI…TGAS. Residues 290 to 303 show a composition bias toward low complexity; sequence TTNNSSSTTSSTTS. Over residues 313–322 the composition is skewed to polar residues; the sequence is SIVNGQSSVL. Over residues 324-335 the composition is skewed to basic and acidic residues; the sequence is ARRDSSSHEETG. A C2H2-type zinc finger spans residues 344 to 369; that stretch reads GVCKWPGCESICEDFGQFLKHLNNEH. The leucine-zipper stretch occupies residues 386–407; it reads VQQLEIQLSKERERLQAMMTHL. Residues 420–424 are CTBP1-binding; sequence PLNLV. The span at 436 to 457 shows a compositional bias: low complexity; sequence TSPQSLPQTPTTPTAPVTPITQ. A disordered region spans residues 436 to 463; the sequence is TSPQSLPQTPTTPTAPVTPITQGPSVIT. Positions 502–592 form a DNA-binding region, fork-head; that stretch reads RPPFTYATLI…SQKITGSPTL (91 aa). Disordered regions lie at residues 647–666 and 676–713; these read LDHI…QPHI and VIAE…EDLE. The span at 697–713 shows a compositional bias: acidic residues; sequence LEDDREIEEEPLSEDLE.

In terms of assembly, forms homodimers and heterodimers with FOXP1 and FOXP4. Dimerization is required for DNA-binding. Interacts with CTBP1. Interacts with FOXP1. Interacts with TBR1. Interacts with ZMYM2.

It localises to the nucleus. In terms of biological role, transcriptional repressor that may play a role in the specification and differentiation of lung epithelium. May also play a role in developing neural, gastrointestinal and cardiovascular tissues. Can act with CTBP1 to synergistically repress transcription but CTPBP1 is not essential. Plays a role in synapse formation by regulating SRPX2 levels. In Pongo pygmaeus (Bornean orangutan), this protein is Forkhead box protein P2 (FOXP2).